The chain runs to 83 residues: DNA-directed RNA polymerase subunit Rpo5 (83 aa).

Belongs to the archaeal Rpo5/eukaryotic RPB5 RNA polymerase subunit family. As to quaternary structure, part of the RNA polymerase complex.

The protein localises to the cytoplasm. The catalysed reaction is RNA(n) + a ribonucleoside 5'-triphosphate = RNA(n+1) + diphosphate. Functionally, DNA-dependent RNA polymerase (RNAP) catalyzes the transcription of DNA into RNA using the four ribonucleoside triphosphates as substrates. This chain is DNA-directed RNA polymerase subunit Rpo5, found in Nitrosopumilus maritimus (strain SCM1).